The following is a 168-amino-acid chain: MPDPARAKRLAKRISTIVASAIEYEIKDPRLAGVTITDAKVTNDLHDATLYYTVLGRSLDEEPDYEGAAAGLEKAKGVLRTKVGASLGVRFTPTLAFARDTVPDAAHRMEALLAQARAADEDLARVREGAKHAGDSDPYRVLGEGDLEGPATGGPDVEDEGGANSHDR.

The segment covering 125–138 (RVREGAKHAGDSDP) has biased composition (basic and acidic residues). Positions 125 to 168 (RVREGAKHAGDSDPYRVLGEGDLEGPATGGPDVEDEGGANSHDR) are disordered.

The protein belongs to the RbfA family. Monomer. Binds 30S ribosomal subunits, but not 50S ribosomal subunits or 70S ribosomes.

The protein localises to the cytoplasm. Functionally, one of several proteins that assist in the late maturation steps of the functional core of the 30S ribosomal subunit. Associates with free 30S ribosomal subunits (but not with 30S subunits that are part of 70S ribosomes or polysomes). Required for efficient processing of 16S rRNA. May interact with the 5'-terminal helix region of 16S rRNA. In Mycolicibacterium gilvum (strain PYR-GCK) (Mycobacterium gilvum (strain PYR-GCK)), this protein is Ribosome-binding factor A.